We begin with the raw amino-acid sequence, 85 residues long: Depressant scorpion toxin BmKIM (85 aa).

The first 21 residues, 1–21, serve as a signal peptide directing secretion; it reads MKLFLLLVFFASMLIDGLVNA. In terms of domain architecture, LCN-type CS-alpha/beta spans 22-82; the sequence is DGYIRGSNGC…TWKSESNTCG (61 aa). Cystine bridges form between Cys31/Cys81, Cys35/Cys56, Cys42/Cys63, and Cys46/Cys65. Gly82 carries the glycine amide modification.

This sequence belongs to the long (4 C-C) scorpion toxin superfamily. Sodium channel inhibitor family. Expressed by the venom gland.

The protein resides in the secreted. Functionally, causes a slow progressive depressant flaccid paralysis, when injected into S.falculata blowfly larvae. Inhibits dose-dependently the total sodium (Nav) currents both in dorsal root ganglia neurons and in ventricular myocytes. Is toxic to mice by intravenous injection, but not by subcutaneous or intracerebroventricular injection. Produces antiarrhythmia in rat. Is then active on both mammals and insects. The polypeptide is Depressant scorpion toxin BmKIM (KIM2) (Olivierus martensii (Manchurian scorpion)).